Consider the following 73-residue polypeptide: Putative membrane protein insertion efficiency factor (73 aa).

Belongs to the UPF0161 family.

It is found in the cell inner membrane. In terms of biological role, could be involved in insertion of integral membrane proteins into the membrane. In Neisseria gonorrhoeae (strain ATCC 700825 / FA 1090), this protein is Putative membrane protein insertion efficiency factor.